The following is a 90-amino-acid chain: Cell division protein CrgA (90 aa).

A disordered region spans residues 1-26 (MPKAKVTKNSIAPVSSNPSANRTPVK). Residues 7–26 (TKNSIAPVSSNPSANRTPVK) are compositionally biased toward polar residues. Transmembrane regions (helical) follow at residues 38-58 (VIMF…YLVG) and 69-89 (AWNY…TMGW).

Belongs to the CrgA family.

It is found in the cell membrane. Functionally, involved in cell division. This is Cell division protein CrgA from Corynebacterium efficiens (strain DSM 44549 / YS-314 / AJ 12310 / JCM 11189 / NBRC 100395).